The primary structure comprises 260 residues: Triosephosphate isomerase (260 aa).

11–13 (NWK) is a binding site for substrate. Residue His-103 is the Electrophile of the active site. The Proton acceptor role is filled by Glu-175. Residues Gly-181, Ser-220, and 241–242 (GG) contribute to the substrate site.

It belongs to the triosephosphate isomerase family. As to quaternary structure, homodimer.

The protein resides in the cytoplasm. The catalysed reaction is D-glyceraldehyde 3-phosphate = dihydroxyacetone phosphate. Its pathway is carbohydrate biosynthesis; gluconeogenesis. It participates in carbohydrate degradation; glycolysis; D-glyceraldehyde 3-phosphate from glycerone phosphate: step 1/1. In terms of biological role, involved in the gluconeogenesis. Catalyzes stereospecifically the conversion of dihydroxyacetone phosphate (DHAP) to D-glyceraldehyde-3-phosphate (G3P). The protein is Triosephosphate isomerase of Shewanella pealeana (strain ATCC 700345 / ANG-SQ1).